We begin with the raw amino-acid sequence, 923 residues long: Neuropilin-1a (923 aa).

The first 19 residues, 1-19 (MHCGLVLILFTGIFLIVSA), serve as a signal peptide directing secretion. At 20 to 856 (LKNDKCGDNI…AGNMLKTLDP (837 aa)) the chain is on the extracellular side. Intrachain disulfides connect Cys-25/Cys-52, Cys-80/Cys-102, and Cys-145/Cys-171. CUB domains follow at residues 25–139 (CGDN…YEIF) and 145–263 (CSRN…FTVL). Asn-148 carries an N-linked (GlcNAc...) asparagine glycan. Positions 193, 207, and 248 each coordinate Ca(2+). Cys-204 and Cys-226 are oxidised to a cystine. An N-linked (GlcNAc...) asparagine glycan is attached at Asn-259. 2 disulfide bridges follow: Cys-273–Cys-422 and Cys-429–Cys-581. F5/8 type C domains lie at 273 to 422 (CTEP…VYGC) and 429 to 581 (CSGM…LLGC). Asn-520 carries an N-linked (GlcNAc...) asparagine glycan. Residues 587-624 (TVPPTTPAASTTPSDECDDDQANCHSGTGDGYDQTGGT) are disordered. A glycan (O-linked (Xyl...) (chondroitin sulfate) serine; alternate) is linked at Ser-612. Ser-612 carries an O-linked (Xyl...) (heparan sulfate) serine; alternate glycan. Positions 642-811 (FACDFGWAND…DNVNMADCKD (170 aa)) constitute an MAM domain. A helical transmembrane segment spans residues 857-877 (ILITIIAMSALGVFLGAICGV). At 878–923 (VLYCACSHSGMSDRNLSALENYNFELVDGVKLKKDKLNSQNSYSEA) the chain is on the cytoplasmic side.

This sequence belongs to the neuropilin family.

It is found in the membrane. In terms of biological role, receptor involved in the development of the cardiovascular system, in angiogenesis, in the formation of certain neuronal circuits and in organogenesis outside the nervous system. It mediates the chemorepulsant activity of semaphorins. Regulates angiogenesis through a VEGF-dependent pathway. The chain is Neuropilin-1a (nrp1a) from Danio rerio (Zebrafish).